The sequence spans 268 residues: NADPH-dependent 7-cyano-7-deazaguanine reductase (268 aa).

79–81 serves as a coordination point for substrate; the sequence is VES. 81 to 82 is a binding site for NADPH; the sequence is SK. The Thioimide intermediate role is filled by cysteine 176. Residue aspartate 183 is the Proton donor of the active site. A substrate-binding site is contributed by 215–216; the sequence is HE. 244-245 contacts NADPH; that stretch reads RG.

The protein belongs to the GTP cyclohydrolase I family. QueF type 2 subfamily. In terms of assembly, homodimer.

Its subcellular location is the cytoplasm. The catalysed reaction is 7-aminomethyl-7-carbaguanine + 2 NADP(+) = 7-cyano-7-deazaguanine + 2 NADPH + 3 H(+). It functions in the pathway tRNA modification; tRNA-queuosine biosynthesis. Functionally, catalyzes the NADPH-dependent reduction of 7-cyano-7-deazaguanine (preQ0) to 7-aminomethyl-7-deazaguanine (preQ1). The polypeptide is NADPH-dependent 7-cyano-7-deazaguanine reductase (Saccharophagus degradans (strain 2-40 / ATCC 43961 / DSM 17024)).